We begin with the raw amino-acid sequence, 319 residues long: Lipoyl synthase (319 aa).

[4Fe-4S] cluster is bound by residues Cys66, Cys71, Cys77, Cys92, Cys96, Cys99, and Ser305. Residues 78–294 (FNRGTATFMI…KKEALSIGFT (217 aa)) enclose the Radical SAM core domain.

The protein belongs to the radical SAM superfamily. Lipoyl synthase family. [4Fe-4S] cluster serves as cofactor.

Its subcellular location is the cytoplasm. The catalysed reaction is [[Fe-S] cluster scaffold protein carrying a second [4Fe-4S](2+) cluster] + N(6)-octanoyl-L-lysyl-[protein] + 2 oxidized [2Fe-2S]-[ferredoxin] + 2 S-adenosyl-L-methionine + 4 H(+) = [[Fe-S] cluster scaffold protein] + N(6)-[(R)-dihydrolipoyl]-L-lysyl-[protein] + 4 Fe(3+) + 2 hydrogen sulfide + 2 5'-deoxyadenosine + 2 L-methionine + 2 reduced [2Fe-2S]-[ferredoxin]. It participates in protein modification; protein lipoylation via endogenous pathway; protein N(6)-(lipoyl)lysine from octanoyl-[acyl-carrier-protein]: step 2/2. In terms of biological role, catalyzes the radical-mediated insertion of two sulfur atoms into the C-6 and C-8 positions of the octanoyl moiety bound to the lipoyl domains of lipoate-dependent enzymes, thereby converting the octanoylated domains into lipoylated derivatives. The protein is Lipoyl synthase of Buchnera aphidicola subsp. Schizaphis graminum (strain Sg).